The sequence spans 229 residues: MNQWEELQESVGFDFKDVELLKQAFTHSSYVNEHRRENVKDNERLEFLGDAVLELTVSDYLFNKYPDMAEGHMTKMRAAIVCEPSLVEFAEAVHFSKYVRLGKGEEKAGGRTRPALLADVFESFIGALYLDNGIDKVVTFLERVIFPKIDAGAYLQTVDYKTQLQEIVQRDRDVLIEYDILGETGPAHNKAFDAQVIVNGQVLGKGSGRTKKQAEQSAAQFAINQLTHR.

The 130-residue stretch at 4 to 133 (WEELQESVGF…FIGALYLDNG (130 aa)) folds into the RNase III domain. Residue glutamate 46 coordinates Mg(2+). Residue aspartate 50 is part of the active site. 2 residues coordinate Mg(2+): aspartate 119 and glutamate 122. Glutamate 122 is an active-site residue. Residues 159-228 (DYKTQLQEIV…AQFAINQLTH (70 aa)) form the DRBM domain.

Belongs to the ribonuclease III family. As to quaternary structure, homodimer. Mg(2+) is required as a cofactor.

The protein localises to the cytoplasm. It carries out the reaction Endonucleolytic cleavage to 5'-phosphomonoester.. Its function is as follows. Digests double-stranded RNA. Involved in the processing of primary rRNA transcript to yield the immediate precursors to the large and small rRNAs (23S and 16S). Processes some mRNAs, and tRNAs when they are encoded in the rRNA operon. Processes pre-crRNA and tracrRNA of type II CRISPR loci if present in the organism. The protein is Ribonuclease 3 of Listeria monocytogenes serotype 4a (strain HCC23).